Reading from the N-terminus, the 361-residue chain is Large ribosomal subunit protein mL45 (361 aa).

A disordered region spans residues 319–361 (EPPKELSAGDAEVKQVDSVGEQSKEQLPLATPVESHTKPSLAI).

It belongs to the mitochondrion-specific ribosomal protein mL45 family.

The protein localises to the mitochondrion. The sequence is that of Large ribosomal subunit protein mL45 (mRpL45) from Drosophila melanogaster (Fruit fly).